The following is a 119-amino-acid chain: UPF0102 protein FP2501 (119 aa).

Belongs to the UPF0102 family.

The chain is UPF0102 protein FP2501 from Flavobacterium psychrophilum (strain ATCC 49511 / DSM 21280 / CIP 103535 / JIP02/86).